The following is a 302-amino-acid chain: Alpha-N-acetyl-neuraminyl-2,3-beta-galactosyl-1,3-N-acetyl-galactosaminide alpha-2,6-sialyltransferase (302 aa).

The Cytoplasmic segment spans residues 1 to 6 (MKAPGR). The chain crosses the membrane as a helical; Signal-anchor for type II membrane protein span at residues 7–27 (LVLIILCSVVFSAVYILLCCW). The Lumenal segment spans residues 28–302 (AGLPLCLATC…VFAHPSWRTE (275 aa)). An intrachain disulfide couples cysteine 76 to cysteine 225. Asparagine 135 carries N-linked (GlcNAc...) asparagine glycosylation.

Belongs to the glycosyltransferase 29 family. Ubiquitous.

It is found in the golgi apparatus membrane. The catalysed reaction is an alpha-Neu5Ac-(2-&gt;3)-beta-D-Gal-(1-&gt;3)-D-GlcNAc derivative + CMP-N-acetyl-beta-neuraminate = an alpha-Neu5Ac-(2-&gt;3)-beta-D-Gal-(1-&gt;3)-[alpha-Neu5Ac-(2-&gt;6)]-D-GlcNAc derivative + CMP + H(+). The enzyme catalyses N-acetyl-alpha-neuraminosyl-(2-&gt;3)-beta-D-galactosyl-(1-&gt;3)-N-acetyl-D-galactosamine + CMP-N-acetyl-beta-neuraminate = N-acetyl-alpha-neuraminosyl-(2-&gt;3)-beta-D-galactosyl-(1-&gt;3)-[N-acetyl-alpha-neuraminosyl-(2-&gt;6)]-N-acetyl-D-galactosamine + CMP + H(+). It carries out the reaction a ganglioside GM1b (d18:1(4E)) + CMP-N-acetyl-beta-neuraminate = a ganglioside GD1alpha (d18:1(4E)) + CMP + H(+). It catalyses the reaction 3-O-[alpha-Neu5Ac-(2-&gt;3)-beta-D-Gal-(1-&gt;3)-alpha-D-GalNAc]-L-Ser-[protein] + CMP-N-acetyl-beta-neuraminate = a 3-O-{alpha-Neu5Ac-(2-&gt;3)-beta-D-Gal-(1-&gt;3)-[alpha-Neu5Ac-(2-&gt;6)]-alpha-D-GalNAc}-L-seryl-[protein] + CMP + H(+). The catalysed reaction is 3-O-[alpha-Neu5Ac-(2-&gt;3)-beta-D-Gal-(1-&gt;3)-alpha-D-GalNAc]-L-Thr-[protein] + CMP-N-acetyl-beta-neuraminate = a 3-O-{alpha-Neu5Ac-(2-&gt;3)-beta-D-Gal-(1-&gt;3)-[alpha-Neu5Ac-(2-&gt;6)]-alpha-D-GalNAc}-L-threonyl-[protein] + CMP + H(+). It functions in the pathway protein modification; protein glycosylation. The protein operates within glycolipid biosynthesis. Functionally, transfers the sialyl group (N-acetyl-alpha-neuraminyl or NeuAc) from CMP-NeuAc to the GalNAc residue on the NeuAc-alpha-2,3-Gal-beta-1,3-GalNAc sequence of glycoproteins and glycolipids forming an alpha-2,6-linkage. Produces branched type disialyl structures by transfer of a sialyl group onto a GalNAc residue inside the backbone core chains. Prefers O-glycans to glycoproteins or glycolipids. In Homo sapiens (Human), this protein is Alpha-N-acetyl-neuraminyl-2,3-beta-galactosyl-1,3-N-acetyl-galactosaminide alpha-2,6-sialyltransferase (ST6GALNAC4).